We begin with the raw amino-acid sequence, 277 residues long: Large ribosomal subunit protein uL2 (277 aa).

2 disordered regions span residues 36–58 and 219–277; these read PLHK…GGGH and TVRG…RKNK. Positions 258–277 are enriched in basic residues; sequence KTRKKKNKSDKFIVRRRKNK.

It belongs to the universal ribosomal protein uL2 family. As to quaternary structure, part of the 50S ribosomal subunit. Forms a bridge to the 30S subunit in the 70S ribosome.

One of the primary rRNA binding proteins. Required for association of the 30S and 50S subunits to form the 70S ribosome, for tRNA binding and peptide bond formation. It has been suggested to have peptidyltransferase activity; this is somewhat controversial. Makes several contacts with the 16S rRNA in the 70S ribosome. The sequence is that of Large ribosomal subunit protein uL2 from Bacillus velezensis (strain DSM 23117 / BGSC 10A6 / LMG 26770 / FZB42) (Bacillus amyloliquefaciens subsp. plantarum).